The chain runs to 108 residues: UPF0060 membrane protein Msil_1658 (108 aa).

The next 4 helical transmembrane spans lie at Leu5–Leu25, Ser31–Ile51, Ala62–Trp82, and Leu88–Ala108.

Belongs to the UPF0060 family.

It is found in the cell inner membrane. The sequence is that of UPF0060 membrane protein Msil_1658 from Methylocella silvestris (strain DSM 15510 / CIP 108128 / LMG 27833 / NCIMB 13906 / BL2).